The sequence spans 155 residues: Microsomal glutathione S-transferase 1 (155 aa).

At 3 to 9 (DLRQLMD) the chain is on the lumenal side. Residues 10–33 (NEVLMAFTSYATIILTKMMFMSSA) traverse the membrane as a helical segment. At 34–62 (TAFQRITNKVFANPEDCAGFGKGENAKKF) the chain is on the cytoplasmic side. Residue Arg38 coordinates glutathione. Lys42, Lys55, and Lys60 each carry N6-acetyllysine. The chain crosses the membrane as a helical span at residues 63 to 96 (VRTDEKVERVRRAHLNDLENIVPFLGIGLLYSLS). Residues Arg73, Arg74, His76, and Glu81 each coordinate glutathione. The Lumenal segment spans residues 97–99 (GPD). Residues 100–123 (LSTALMHFRIFVGARIYHTIAYLT) form a helical membrane-spanning segment. Tyr121 provides a ligand contact to glutathione. Residues 124–128 (PLPQP) lie on the Cytoplasmic side of the membrane. Residues 129–148 (NRGLAFFVGYGVTLSMAYRL) form a helical membrane-spanning segment. Topologically, residues 149–155 (LRSRLYL) are lumenal.

The protein belongs to the MAPEG family. As to quaternary structure, homotrimer; The trimer binds only one molecule of glutathione. Post-translationally, acetylation of Lys-42 and Lys-55 is observed in liver mitochondria from fasted mice but not from fed mice. As to expression, expressed in the testes (at protein level).

Its subcellular location is the endoplasmic reticulum membrane. It is found in the mitochondrion outer membrane. The catalysed reaction is RX + glutathione = an S-substituted glutathione + a halide anion + H(+). Its function is as follows. Conjugation of reduced glutathione to a wide number of exogenous and endogenous hydrophobic electrophiles. The chain is Microsomal glutathione S-transferase 1 (Mgst1) from Mus musculus (Mouse).